The primary structure comprises 504 residues: Protein Dok-7 (504 aa).

The 106-residue stretch at 4-109 (AALVEGQVKL…WDARIRYALG (106 aa)) folds into the PH domain. The IRS-type PTB domain maps to 105–210 (RYALGEVHRF…RGISPTKGPF (106 aa)). Disordered stretches follow at residues 210 to 229 (FGLRPVLPDPSPPGPSTVEE), 249 to 351 (SHAG…YSSS), and 411 to 483 (LCLA…PHAG). Low complexity-rich tracts occupy residues 263–279 (LSSSSSEASHLDVSASS) and 288–310 (SSSSASTSQEGPRPAAAQAAGEA). The span at 331 to 341 (GRQSSSDSGIA) shows a compositional bias: polar residues.

In terms of assembly, homodimer. Forms a heterotetramer composed of 2 DOK7 and 2 MUSK molecules which facilitates MUSK trans-autophosphorylation on tyrosine residue and activation. Interacts (via IRS-type PTB domain) with MUSK (via cytoplasmic part); requires MUSK phosphorylation. Preferentially expressed in skeletal muscle and heart. Present in thigh muscle, diaphragm and heart but not in the liver or spleen (at protein level).

It is found in the cell membrane. It localises to the synapse. Its function is as follows. Probable muscle-intrinsic activator of MUSK that plays an essential role in neuromuscular synaptogenesis. Acts in aneural activation of MUSK and subsequent acetylcholine receptor (AchR) clustering in myotubes. Induces autophosphorylation of MUSK. The protein is Protein Dok-7 (DOK7) of Homo sapiens (Human).